Reading from the N-terminus, the 165-residue chain is Type 3 secretion system regulator YopR (165 aa).

It belongs to the YopR family.

The protein localises to the secreted. May be involved in the regulation of the assembly of the type III secretion system (T3SS), also called injectisome, which is used to inject bacterial effector proteins into eukaryotic host cells. May control the secretion and/or polymerization of YscF/SctF, the principal component of the needle filament, thereby impacting the assembly of the T3SS. Involved in pathogenesis. The protein is Type 3 secretion system regulator YopR of Yersinia pseudotuberculosis serotype I (strain IP32953).